We begin with the raw amino-acid sequence, 302 residues long: RING-H2 finger protein ATL38 (302 aa).

The chain crosses the membrane as a helical span at residues 15–35; sequence LLVITIILFAIFIVGLASVCF. The RING-type; atypical zinc finger occupies 96–138; that stretch reads CAVCICEFEDHETLRLMPECCHVFHADCVSVWLSDHSTCPLCR. The interval 279–302 is disordered; that stretch reads GEAVAPSKDSRRISVEQSQLDDRV. The span at 286–302 shows a compositional bias: basic and acidic residues; it reads KDSRRISVEQSQLDDRV.

Belongs to the RING-type zinc finger family. ATL subfamily.

It localises to the membrane. It carries out the reaction S-ubiquitinyl-[E2 ubiquitin-conjugating enzyme]-L-cysteine + [acceptor protein]-L-lysine = [E2 ubiquitin-conjugating enzyme]-L-cysteine + N(6)-ubiquitinyl-[acceptor protein]-L-lysine.. Its pathway is protein modification; protein ubiquitination. The protein is RING-H2 finger protein ATL38 (ATL38) of Arabidopsis thaliana (Mouse-ear cress).